A 440-amino-acid chain; its full sequence is Thymidine phosphorylase (440 aa).

Belongs to the thymidine/pyrimidine-nucleoside phosphorylase family. As to quaternary structure, homodimer.

It catalyses the reaction thymidine + phosphate = 2-deoxy-alpha-D-ribose 1-phosphate + thymine. It functions in the pathway pyrimidine metabolism; dTMP biosynthesis via salvage pathway; dTMP from thymine: step 1/2. Its function is as follows. The enzymes which catalyze the reversible phosphorolysis of pyrimidine nucleosides are involved in the degradation of these compounds and in their utilization as carbon and energy sources, or in the rescue of pyrimidine bases for nucleotide synthesis. The sequence is that of Thymidine phosphorylase from Klebsiella pneumoniae subsp. pneumoniae (strain ATCC 700721 / MGH 78578).